A 130-amino-acid polypeptide reads, in one-letter code: Small ribosomal subunit protein uS11 (130 aa).

Belongs to the universal ribosomal protein uS11 family. Part of the 30S ribosomal subunit. Interacts with proteins S7 and S18. Binds to IF-3.

Located on the platform of the 30S subunit, it bridges several disparate RNA helices of the 16S rRNA. Forms part of the Shine-Dalgarno cleft in the 70S ribosome. The protein is Small ribosomal subunit protein uS11 of Prochlorococcus marinus (strain NATL2A).